The following is a 70-amino-acid chain: Large ribosomal subunit protein bL31c (70 aa).

Belongs to the bacterial ribosomal protein bL31 family. Type A subfamily. Part of the 50S ribosomal subunit.

The protein resides in the plastid. It localises to the chloroplast. Binds the 23S rRNA. This is Large ribosomal subunit protein bL31c from Porphyra purpurea (Red seaweed).